The chain runs to 150 residues: MNKTVVPSLNTVERHWYVVDAENQCLGRLATEVASVLRGKNKPTYTPHLDTGDFVVVINADKVKVTGNKASDKLYRRHSGRPGGMKVETFAALQQRIPERIVEKAIKGMLPHNALGRQLFRKLKVYKGAEHPHGAQQPQPYQLNPSASIK.

The disordered stretch occupies residues 130–150 (EHPHGAQQPQPYQLNPSASIK). Residues 136–150 (QQPQPYQLNPSASIK) show a composition bias toward polar residues.

It belongs to the universal ribosomal protein uL13 family. In terms of assembly, part of the 50S ribosomal subunit.

Its function is as follows. This protein is one of the early assembly proteins of the 50S ribosomal subunit, although it is not seen to bind rRNA by itself. It is important during the early stages of 50S assembly. This chain is Large ribosomal subunit protein uL13, found in Synechococcus sp. (strain RCC307).